We begin with the raw amino-acid sequence, 37 residues long: MKVRASVKKICDKCKVIHREGVVRVICTNPKHKQRQG.

The protein belongs to the bacterial ribosomal protein bL36 family.

The protein is Large ribosomal subunit protein bL36 of Solibacter usitatus (strain Ellin6076).